The following is a 158-amino-acid chain: Ribonucleases P/MRP protein subunit POP6 (158 aa).

Residues 51 to 71 are a coiled coil; the sequence is KNDNIKKSVNKLDKQINMADR.

In terms of assembly, component of nuclear RNase P and RNase MRP complexes. RNase P consists of an RNA moiety and at least 9 protein subunits including POP1, POP3, POP4, POP5, POP6, POP7, POP8, RPP1 and RPR2. RNase MRP complex consists of an RNA moiety and at least 10 protein subunits including POP1, POP3, POP4, POP5, POP6, POP7, POP8, RMP1, RPP1 and SNM1, many of which are shared with the RNase P complex.

Its subcellular location is the nucleus. It carries out the reaction Endonucleolytic cleavage of RNA, removing 5'-extranucleotides from tRNA precursor.. Functionally, component of ribonuclease P, a protein complex that generates mature tRNA molecules by cleaving their 5'-ends. Also a component of RNase MRP, which cleaves pre-rRNA sequences. The protein is Ribonucleases P/MRP protein subunit POP6 (POP6) of Saccharomyces cerevisiae (strain ATCC 204508 / S288c) (Baker's yeast).